A 125-amino-acid polypeptide reads, in one-letter code: Glycine cleavage system H protein (125 aa).

A Lipoyl-binding domain is found at 22 to 104 (SYVIGITDFA…YDTGWILKLE (83 aa)). Position 63 is an N6-lipoyllysine (K63).

This sequence belongs to the GcvH family. As to quaternary structure, the glycine cleavage system is composed of four proteins: P, T, L and H. Requires (R)-lipoate as cofactor.

Its function is as follows. The glycine cleavage system catalyzes the degradation of glycine. The H protein shuttles the methylamine group of glycine from the P protein to the T protein. Functionally, is also involved in protein lipoylation via its role as an octanoyl/lipoyl carrier protein intermediate. The polypeptide is Glycine cleavage system H protein (Listeria monocytogenes serotype 4a (strain HCC23)).